We begin with the raw amino-acid sequence, 324 residues long: Arginase (324 aa).

4 residues coordinate Mn(2+): histidine 115, aspartate 143, histidine 145, and aspartate 147. Substrate-binding positions include 145-149 (HADIN), 156-158 (SGN), and aspartate 202. Aspartate 249 and aspartate 251 together coordinate Mn(2+). Positions 263 and 294 each coordinate substrate.

It belongs to the arginase family. Homotrimer. It depends on Mn(2+) as a cofactor.

It carries out the reaction L-arginine + H2O = urea + L-ornithine. Its pathway is nitrogen metabolism; urea cycle; L-ornithine and urea from L-arginine: step 1/1. This Emericella nidulans (strain FGSC A4 / ATCC 38163 / CBS 112.46 / NRRL 194 / M139) (Aspergillus nidulans) protein is Arginase (agaA).